We begin with the raw amino-acid sequence, 240 residues long: Putative N-acetylmannosamine-6-phosphate 2-epimerase (240 aa).

It belongs to the NanE family.

It carries out the reaction an N-acyl-D-glucosamine 6-phosphate = an N-acyl-D-mannosamine 6-phosphate. It participates in amino-sugar metabolism; N-acetylneuraminate degradation; D-fructose 6-phosphate from N-acetylneuraminate: step 3/5. In terms of biological role, converts N-acetylmannosamine-6-phosphate (ManNAc-6-P) to N-acetylglucosamine-6-phosphate (GlcNAc-6-P). This chain is Putative N-acetylmannosamine-6-phosphate 2-epimerase, found in Vibrio cholerae serotype O1 (strain ATCC 39315 / El Tor Inaba N16961).